Here is a 37-residue protein sequence, read N- to C-terminus: Large ribosomal subunit protein bL36 (37 aa).

Belongs to the bacterial ribosomal protein bL36 family.

The chain is Large ribosomal subunit protein bL36 from Shewanella frigidimarina (strain NCIMB 400).